The sequence spans 393 residues: S-adenosylmethionine synthase 3 (393 aa).

Glu-9 provides a ligand contact to Mg(2+). His-15 contacts ATP. Glu-43 contacts K(+). Glu-56 and Gln-99 together coordinate L-methionine. ATP-binding positions include 167-169, 235-238, Asp-246, 252-253, Ala-269, Lys-273, and Lys-277; these read NGK, SGRF, and RK. Asp-246 is a binding site for L-methionine. An L-methionine-binding site is contributed by Lys-277.

Belongs to the AdoMet synthase family. Homotetramer. It depends on Mn(2+) as a cofactor. The cofactor is Mg(2+). Co(2+) serves as cofactor. K(+) is required as a cofactor. Mostly expressed in flowers, seedpods and roots, and, to a lower extent, in stems and leaves.

Its subcellular location is the cytoplasm. The enzyme catalyses L-methionine + ATP + H2O = S-adenosyl-L-methionine + phosphate + diphosphate. The protein operates within amino-acid biosynthesis; S-adenosyl-L-methionine biosynthesis; S-adenosyl-L-methionine from L-methionine: step 1/1. In terms of biological role, catalyzes the formation of S-adenosylmethionine from methionine and ATP. The reaction comprises two steps that are both catalyzed by the same enzyme: formation of S-adenosylmethionine (AdoMet) and triphosphate, and subsequent hydrolysis of the triphosphate. The polypeptide is S-adenosylmethionine synthase 3 (MSAMS3) (Brassica juncea (Indian mustard)).